The following is a 918-amino-acid chain: Plasma membrane ATPase 1 (918 aa).

Positions 1 to 18 are enriched in low complexity; that stretch reads MTDTSSSSSSSSASSVSA. Residues 1-84 form a disordered region; that stretch reads MTDTSSSSSS…VPEEYLQTDP (84 aa). Residues 1 to 115 are Cytoplasmic-facing; the sequence is MTDTSSSSSS…ADEKESLVVK (115 aa). The segment covering 33 to 47 has biased composition (acidic residues); the sequence is AASESSDDDDIDALI. Serine 61 bears the Phosphoserine mark. The chain crosses the membrane as a helical span at residues 116–136; it reads FVMFFVGPIQFVMEAAAILAA. At 137-140 the chain is on the extracellular side; it reads GLSD. Residues 141 to 160 form a helical membrane-spanning segment; sequence WVDFGVICGLLMLNAGVGFV. Residues 161–291 are Cytoplasmic-facing; the sequence is QEFQAGSIVD…GQGHFTEVLN (131 aa). Threonine 175 is modified (phosphothreonine). Lysine 252 participates in a covalent cross-link: Glycyl lysine isopeptide (Lys-Gly) (interchain with G-Cter in ubiquitin). A helical membrane pass occupies residues 292 to 313; that stretch reads GIGIILLVLVIATLLLVWTACF. The Extracellular segment spans residues 314–325; it reads YRTNGIVRILRY. The helical transmembrane segment at 326–347 threads the bilayer; that stretch reads TLGITIIGVPVGLPAVVTTTMA. Over 348 to 719 the chain is Cytoplasmic; it reads VGAAYLAKKQ…IAILDNSLDI (372 aa). Aspartate 378 functions as the 4-aspartylphosphate intermediate in the catalytic mechanism. Lysine 555 is covalently cross-linked (Glycyl lysine isopeptide (Lys-Gly) (interchain with G-Cter in ubiquitin)). The Mg(2+) site is built by aspartate 634 and aspartate 638. A helical transmembrane segment spans residues 720 to 738; sequence DLIVFIAIFADVATLAIAY. The Extracellular portion of the chain corresponds to 739 to 754; sequence DNAPYSPKPVKWNLPR. Residues 755-774 traverse the membrane as a helical segment; the sequence is LWGMSIILGIVLAIGSWITL. Residues 775 to 824 lie on the Cytoplasmic side of the membrane; the sequence is TTMFLPKGGIIQNFGAMNGIMFLQISLTENWLIFITRAAGPFWSSIPSWQ. Residues 825-845 form a helical membrane-spanning segment; that stretch reads LAGAVFAVDIIATMFTLFGWW. Topologically, residues 846–857 are extracellular; that stretch reads SENWTDIVTVVR. A helical transmembrane segment spans residues 858-874; it reads VWIWSIGIFCVLGGFYY. At 875-918 the chain is on the cytoplasmic side; sequence EMSTSEAFDRLMNGKPMKEKKSTRSVEDFMAAMQRVSTQHEKET. Phosphoserine is present on serine 911. A phosphothreonine mark is found at threonine 912 and threonine 918.

Belongs to the cation transport ATPase (P-type) (TC 3.A.3) family. Type IIIA subfamily. As to quaternary structure, interacts with its cargot receptor EXP1 for its transport within the cell and maturation. Post-translationally, phosphorylated on multiple Ser and Thr residues.

It localises to the cell membrane. It carries out the reaction ATP + H2O + H(+)(in) = ADP + phosphate + 2 H(+)(out). In terms of biological role, the plasma membrane ATPase of plants and fungi is a hydrogen ion pump. The proton gradient it generates drives the active transport of nutrients by H(+)-symport. The resulting external acidification and/or internal alkinization may mediate growth responses. The sequence is that of Plasma membrane ATPase 1 (PMA1) from Saccharomyces cerevisiae (strain ATCC 204508 / S288c) (Baker's yeast).